The following is a 193-amino-acid chain: Selenoprotein S A (193 aa).

Residues 29-49 (WALASYGWYILFGCIILYFLI) traverse the membrane as a helical segment. The segment covering 114–125 (IETWDRMQEGKS) has biased composition (basic and acidic residues). The interval 114–193 (IETWDRMQEG…RRGPSSGGUG (80 aa)) is disordered. The segment covering 137-153 (SPSTSASSSPSTSSSAP) has biased composition (low complexity). A non-standard amino acid (selenocysteine) is located at residue U192.

The protein belongs to the selenoprotein S family.

The protein localises to the endoplasmic reticulum membrane. It localises to the cytoplasm. In terms of biological role, involved in the degradation process of misfolded endoplasmic reticulum (ER) luminal proteins. Participates in the transfer of misfolded proteins from the ER to the cytosol, where they are destroyed by the proteasome in a ubiquitin-dependent manner. The polypeptide is Selenoprotein S A (vimp-a) (Xenopus laevis (African clawed frog)).